The chain runs to 771 residues: Rho GTPase-activating protein 26 (771 aa).

Residues 7-262 (EFSDCYLDSP…MKENPHEHLA (256 aa)) form the BAR domain. The 105-residue stretch at 265 to 369 (PFTMEGYLYV…WMEAMDGREP (105 aa)) folds into the PH domain. Positions 383–568 (AQLDNIGFSI…IIIENYEEMF (186 aa)) constitute a Rho-GAP domain. The interval 575–712 (PQTNSQLHLS…SSTSSDSSPV (138 aa)) is disordered. The span at 608–617 (HSSEKEEKRN) shows a compositional bias: basic and acidic residues. The span at 618-637 (SVNSSAESVSSSNANSSVNS) shows a compositional bias: low complexity. Composition is skewed to polar residues over residues 638–650 (TCTQ…NLNA) and 662–671 (RPNSLLNPKN). Low complexity-rich tracts occupy residues 673 to 683 (SGLLPSSLNPS) and 691 to 712 (PMVS…SSPV). Residues 713–771 (SVPRKAKALYACKAEHDSELSFSAGTVFENVCPSQEPGWLEGTLNGKTGLIPENYVEFL) enclose the SH3 domain.

Its subcellular location is the cell junction. It is found in the focal adhesion. The protein localises to the cytoplasm. The protein resides in the cytoskeleton. It localises to the endosome membrane. GTPase-activating protein for rhoa and cdc42. May be involved in the regulation of neosynthesized protein export through a Rab-endososomal dependent export route. This chain is Rho GTPase-activating protein 26 (arhgap26), found in Xenopus laevis (African clawed frog).